A 1363-amino-acid chain; its full sequence is Spike glycoprotein (1363 aa).

The signal sequence occupies residues Met1 to Phe13. Topologically, residues Ala14–Pro1307 are extracellular. In terms of domain architecture, BetaCoV S1-NTD spans Val15–Thr298. Disulfide bonds link Cys21-Cys165, Cys160-Cys193, Cys172-Cys252, Cys286-Cys296, and Cys331-Cys356. Asn59 and Asn133 each carry an N-linked (GlcNAc...) asparagine; by host glycan. An N-linked (GlcNAc...) asparagine; by host glycan is attached at Asn198. Residues Pro329–Thr617 enclose the BetaCoV S1-CTD domain. Asn359 is a glycosylation site (N-linked (GlcNAc...) asparagine; by host). 2 cysteine pairs are disulfide-bonded: Cys374–Cys427 and Cys386–Cys615. Asn437, Asn649, Asn676, Asn696, Asn714, Asn739, and Asn788 each carry an N-linked (GlcNAc...) asparagine; by host glycan. 2 fusion peptide regions span residues Ser914–Tyr935 and Glu933–Tyr953. Residue Asn937 is glycosylated (N-linked (GlcNAc...) asparagine; by host). The cysteines at positions 938 and 949 are disulfide-linked. The interval Gln1014–Phe1064 is heptad repeat 1. A coiled-coil region spans residues Gln1043 to Ile1087. Asn1194, Asn1224, Asn1234, Asn1253, Asn1267, and Asn1288 each carry an N-linked (GlcNAc...) asparagine; by host glycan. A heptad repeat 2 region spans residues Ala1258–Asp1296. Residues Thr1269–Ile1297 are a coiled coil. Residues Trp1308–Ile1328 traverse the membrane as a helical segment. Residues Cys1329–Asp1363 lie on the Cytoplasmic side of the membrane. The KxHxx motif lies at Thr1359–Asp1363.

This sequence belongs to the betacoronaviruses spike protein family. As to quaternary structure, homotrimer; each monomer consists of a S1 and a S2 subunit. The resulting peplomers protrude from the virus surface as spikes. Post-translationally, specific enzymatic cleavages in vivo yield mature proteins. The precursor is processed into S1 and S2 by host cell furin or another cellular protease to yield the mature S1 and S2 proteins. Additionally, a second cleavage leads to the release of a fusion peptide after viral attachment to host cell receptor. In terms of processing, the cytoplasmic Cys-rich domain is palmitoylated. Spike glycoprotein is digested within host endosomes.

The protein localises to the virion membrane. Its subcellular location is the host endoplasmic reticulum-Golgi intermediate compartment membrane. It is found in the host cell membrane. Functionally, attaches the virion to the cell membrane by interacting with host receptor, initiating the infection. Its function is as follows. Mediates fusion of the virion and cellular membranes by acting as a class I viral fusion protein. Under the current model, the protein has at least three conformational states: pre-fusion native state, pre-hairpin intermediate state, and post-fusion hairpin state. During viral and target cell membrane fusion, the coiled coil regions (heptad repeats) assume a trimer-of-hairpins structure, positioning the fusion peptide in close proximity to the C-terminal region of the ectodomain. The formation of this structure appears to drive apposition and subsequent fusion of viral and target cell membranes. In terms of biological role, acts as a viral fusion peptide which is unmasked following S2 cleavage occurring upon virus endocytosis. The chain is Spike glycoprotein from Bos taurus (Bovine).